A 683-amino-acid polypeptide reads, in one-letter code: DNA ligase (683 aa).

NAD(+)-binding positions include 42 to 46 (DAEYD), 91 to 92 (SL), and Glu-122. The N6-AMP-lysine intermediate role is filled by Lys-124. The NAD(+) site is built by Arg-145, Glu-182, Lys-299, and Lys-323. 4 residues coordinate Zn(2+): Cys-417, Cys-420, Cys-435, and Cys-441. The BRCT domain maps to 602–683 (APQGVLAGKT…MRKLLEGQTT (82 aa)).

The protein belongs to the NAD-dependent DNA ligase family. LigA subfamily. It depends on Mg(2+) as a cofactor. Mn(2+) is required as a cofactor.

The enzyme catalyses NAD(+) + (deoxyribonucleotide)n-3'-hydroxyl + 5'-phospho-(deoxyribonucleotide)m = (deoxyribonucleotide)n+m + AMP + beta-nicotinamide D-nucleotide.. Its function is as follows. DNA ligase that catalyzes the formation of phosphodiester linkages between 5'-phosphoryl and 3'-hydroxyl groups in double-stranded DNA using NAD as a coenzyme and as the energy source for the reaction. It is essential for DNA replication and repair of damaged DNA. The chain is DNA ligase from Paraburkholderia phymatum (strain DSM 17167 / CIP 108236 / LMG 21445 / STM815) (Burkholderia phymatum).